The following is a 177-amino-acid chain: Large ribosomal subunit protein uL6 (177 aa).

It belongs to the universal ribosomal protein uL6 family. Part of the 50S ribosomal subunit.

Its function is as follows. This protein binds to the 23S rRNA, and is important in its secondary structure. It is located near the subunit interface in the base of the L7/L12 stalk, and near the tRNA binding site of the peptidyltransferase center. This Enterobacter sp. (strain 638) protein is Large ribosomal subunit protein uL6.